Consider the following 722-residue polypeptide: Putative tyrosine-protein kinase in cps region (722 aa).

A run of 2 helical transmembrane segments spans residues 31 to 53 (IIIA…ATPI) and 427 to 449 (IVVL…VRIL).

The protein belongs to the etk/wzc family. In terms of processing, autophosphorylated on tyrosine residue(s).

Its subcellular location is the cell inner membrane. The enzyme catalyses L-tyrosyl-[protein] + ATP = O-phospho-L-tyrosyl-[protein] + ADP + H(+). Its pathway is glycan metabolism; exopolysaccharide biosynthesis. In Klebsiella pneumoniae, this protein is Putative tyrosine-protein kinase in cps region.